The chain runs to 238 residues: Chromosome partition protein MukE (238 aa).

Residues 206–238 are disordered; the sequence is EESSQSSFDLDENEKLSDISAEEQHELELEGDA. Positions 218-238 are enriched in basic and acidic residues; sequence NEKLSDISAEEQHELELEGDA.

This sequence belongs to the MukE family. As to quaternary structure, interacts, and probably forms a ternary complex, with MukF and MukB. The complex formation is stimulated by calcium or magnesium.

The protein resides in the cytoplasm. The protein localises to the nucleoid. Functionally, involved in chromosome condensation, segregation and cell cycle progression. May participate in facilitating chromosome segregation by condensation DNA from both sides of a centrally located replisome during cell division. Probably acts via its interaction with MukB and MukF. The chain is Chromosome partition protein MukE from Aliivibrio salmonicida (strain LFI1238) (Vibrio salmonicida (strain LFI1238)).